We begin with the raw amino-acid sequence, 219 residues long: MAKGILGRKIGMTQVFDEKGSLIPITIVDVSDNVILQQNSVEKNGYLSTQLGFSSKREKLSTKPALGHFKNAKTSPKRFIKEIRFLPGIKNELSELDLGTSLKTNLFQPGDIVDVIGISKGKGFSGSIKRHNQSEGPKSHGSRYHRRPGSMGPIKGKIKGKKLPGQMGHQTVTLQNLKINSIDHEQELFLIKGSIPGPRKGFVMIKTAIKTVIKENQDA.

A disordered region spans residues 124–154 (FSGSIKRHNQSEGPKSHGSRYHRRPGSMGPI).

Belongs to the universal ribosomal protein uL3 family. In terms of assembly, part of the 50S ribosomal subunit. Forms a cluster with proteins L14 and L19.

One of the primary rRNA binding proteins, it binds directly near the 3'-end of the 23S rRNA, where it nucleates assembly of the 50S subunit. The chain is Large ribosomal subunit protein uL3 from Phytoplasma mali (strain AT).